We begin with the raw amino-acid sequence, 53 residues long: Small, acid-soluble spore protein K (53 aa).

The interval 1 to 53 (MRNKERNFPNQNNNKFEGEPRAKAEYASKRANGTTNTHPQERMHASGKRDDNF) is disordered. 2 stretches are compositionally biased toward basic and acidic residues: residues 16–28 (FEGE…EYAS) and 39–53 (PQER…DDNF).

Belongs to the SspK family.

The protein localises to the spore core. In Geobacillus sp. (strain WCH70), this protein is Small, acid-soluble spore protein K.